Here is a 70-residue protein sequence, read N- to C-terminus: Large ribosomal subunit protein bL28c (70 aa).

The protein belongs to the bacterial ribosomal protein bL28 family.

It is found in the plastid. Its subcellular location is the cyanelle. The protein is Large ribosomal subunit protein bL28c (rpl28) of Cyanophora paradoxa.